The chain runs to 433 residues: GTPase Obg (433 aa).

The 159-residue stretch at 1–159 (MAFRDVLDIE…RRVRLELRLI (159 aa)) folds into the Obg domain. One can recognise an OBG-type G domain in the interval 160-327 (ADVGLVGYPN…LRQALFDLLP (168 aa)). ATP-binding positions include 166-173 (GYPNAGKS), 191-195 (FTTLS), 214-217 (DIPG), 280-283 (NKIE), and 308-310 (SAK). Positions 173 and 193 each coordinate Mg(2+). Residues 342–430 (PEEVREEPLT…IGSFRFEYYA (89 aa)) enclose the OCT domain.

Belongs to the TRAFAC class OBG-HflX-like GTPase superfamily. OBG GTPase family. Monomer. The cofactor is Mg(2+).

The protein localises to the cytoplasm. An essential GTPase which binds GTP, GDP and possibly (p)ppGpp with moderate affinity, with high nucleotide exchange rates and a fairly low GTP hydrolysis rate. Plays a role in control of the cell cycle, stress response, ribosome biogenesis and in those bacteria that undergo differentiation, in morphogenesis control. The sequence is that of GTPase Obg from Deinococcus geothermalis (strain DSM 11300 / CIP 105573 / AG-3a).